Consider the following 467-residue polypeptide: Probable serine hydroxymethyltransferase, cytosolic (467 aa).

Lysine 243 bears the N6-(pyridoxal phosphate)lysine mark.

The protein belongs to the SHMT family. In terms of assembly, homotetramer. The cofactor is pyridoxal 5'-phosphate.

It localises to the cytoplasm. The catalysed reaction is (6R)-5,10-methylene-5,6,7,8-tetrahydrofolate + glycine + H2O = (6S)-5,6,7,8-tetrahydrofolate + L-serine. Its pathway is one-carbon metabolism; tetrahydrofolate interconversion. Its function is as follows. Interconversion of serine and glycine. The polypeptide is Probable serine hydroxymethyltransferase, cytosolic (Schizosaccharomyces pombe (strain 972 / ATCC 24843) (Fission yeast)).